Consider the following 216-residue polypeptide: Ribosomal RNA small subunit methyltransferase G (216 aa).

S-adenosyl-L-methionine-binding positions include Gly-73, Leu-78, 124-125, and Arg-139; that span reads AE.

This sequence belongs to the methyltransferase superfamily. RNA methyltransferase RsmG family.

Its subcellular location is the cytoplasm. In terms of biological role, specifically methylates the N7 position of guanine in position 518 of 16S rRNA. The polypeptide is Ribosomal RNA small subunit methyltransferase G (Pseudarthrobacter chlorophenolicus (strain ATCC 700700 / DSM 12829 / CIP 107037 / JCM 12360 / KCTC 9906 / NCIMB 13794 / A6) (Arthrobacter chlorophenolicus)).